The sequence spans 162 residues: KLAMCLVNLSRLKKGDVLLDPFCGTGGFLIEGGFMGLKLIGSDIDDDMVNGTLLNLKSYNLTEHIISIKKWNAGDIKSFLKQLNVKYVDGIVTDPPYGISTSAKGNIEEIFNNLGDVLKKDGYLVFASSRKINLDLELMEMYELYIHKSLTRYIHVYKKTDN.

This sequence belongs to the methyltransferase superfamily. Trm-G10 family. In terms of assembly, monomer.

It localises to the cytoplasm. It catalyses the reaction guanosine(10) in tRNA + 2 S-adenosyl-L-methionine = N(2)-dimethylguanosine(10) in tRNA + 2 S-adenosyl-L-homocysteine + 2 H(+). Functionally, catalyzes the adenosylmethionine-dependent methylation of the exocyclic amino group (N(2)) of guanosine at position 10 of various tRNAs. Acts via a two-step process that leads to the formation of either N(2)-monomethyl (m(2)G) or N(2)-dimethylguanosine (m(2)(2)G). The sequence is that of Probable tRNA (guanine(10)-N2)-dimethyltransferase (trmG10) from Methanothermococcus thermolithotrophicus (Methanococcus thermolithotrophicus).